The chain runs to 80 residues: Large ribosomal subunit protein bL28 (80 aa).

The interval 1–21 (MSRICQITRKKSMKGNSVAHS) is disordered.

Belongs to the bacterial ribosomal protein bL28 family.

The polypeptide is Large ribosomal subunit protein bL28 (Azobacteroides pseudotrichonymphae genomovar. CFP2).